Reading from the N-terminus, the 162-residue chain is Selenoprotein F (162 aa).

The signal sequence occupies residues 1–28 (MAARRDGWLGPAFGLRLLLATVLQTVSA). A non-standard amino acid (selenocysteine) is located at residue Sec93.

It belongs to the selenoprotein M/F family. In terms of assembly, forms a tight complex with UGGT1/UGCGL1. Interacts with UGGT2/UGCGL2. Interacts with RDH11.

Its subcellular location is the endoplasmic reticulum lumen. May be involved in redox reactions associated with the formation of disulfide bonds. May contribute to the quality control of protein folding in the endoplasmic reticulum. May regulate protein folding by enhancing the catalytic activity of UGGT1/UGCGL1 and UGGT2/UGCGL2. The protein is Selenoprotein F of Bos taurus (Bovine).